The primary structure comprises 546 residues: (-)-5-epieremophilene synthase STPS1 (546 aa).

Mg(2+)-binding residues include aspartate 299, aspartate 303, aspartate 442, threonine 446, and glutamate 450. The short motif at aspartate 299–aspartate 303 is the DDXXD motif element.

This sequence belongs to the terpene synthase family. Tpsa subfamily. In terms of assembly, monomer. Mg(2+) serves as cofactor. In terms of tissue distribution, highly expressed in leaves and at lower levels in flowers.

The catalysed reaction is (2E,6E)-farnesyl diphosphate = (-)-5-epi-eremophilene + diphosphate. It participates in secondary metabolite biosynthesis; terpenoid biosynthesis. Sesquiterpene synthase that catalyzes the conversion of farnesyl diphosphate to (-)-5-epi-eremophilene. The chain is (-)-5-epieremophilene synthase STPS1 from Salvia miltiorrhiza (Chinese sage).